The primary structure comprises 21 residues: Peptide PGLa-R3 (21 aa).

The residue at position 21 (Leu21) is a Leucine amide.

Expressed by the skin glands.

The protein localises to the secreted. Functionally, antimicrobial peptide. The protein is Peptide PGLa-R3 of Xenopus ruwenzoriensis (Uganda clawed frog).